Here is a 353-residue protein sequence, read N- to C-terminus: Polyprenal reductase 2 (353 aa).

6 helical membrane-spanning segments follow: residues 11–31 (PLLC…ALPI), 78–98 (FMHF…AIWF), 175–195 (MHIV…LSLA), 234–254 (PLLK…WGSL), 291–308 (YLAE…SGAE), and 313–335 (WFLF…NWYL).

The protein belongs to the steroid 5-alpha reductase family. Polyprenal reductase subfamily.

It is found in the cell membrane. It carries out the reaction a di-trans,poly-cis-dolichal + NADP(+) = a di-trans,poly-cis-polyprenal + NADPH + H(+). It participates in protein modification; protein glycosylation. In terms of biological role, plays a key role in early steps of protein N-linked glycosylation by being involved in the conversion of polyprenol into dolichol. Acts as a polyprenal reductase that mediates the reduction of polyprenal into dolichal in a NADP-dependent mechanism. Dolichols are required for the synthesis of dolichol-linked monosaccharides and the oligosaccharide precursor used for N-glycosylation. The protein is Polyprenal reductase 2 of Oryza sativa subsp. japonica (Rice).